A 156-amino-acid chain; its full sequence is Small ribosomal subunit protein uS7 (156 aa).

This sequence belongs to the universal ribosomal protein uS7 family. Part of the 30S ribosomal subunit. Contacts proteins S9 and S11.

One of the primary rRNA binding proteins, it binds directly to 16S rRNA where it nucleates assembly of the head domain of the 30S subunit. Is located at the subunit interface close to the decoding center, probably blocks exit of the E-site tRNA. This is Small ribosomal subunit protein uS7 from Finegoldia magna (strain ATCC 29328 / DSM 20472 / WAL 2508) (Peptostreptococcus magnus).